A 762-amino-acid chain; its full sequence is Endonuclease MutS2 (762 aa).

Position 329-336 (329-336 (GPNTGGKT)) interacts with ATP. Positions 682 to 757 (LNLIGKDVET…GSGVTVVYLE (76 aa)) constitute a Smr domain.

The protein belongs to the DNA mismatch repair MutS family. MutS2 subfamily. In terms of assembly, homodimer. Binds to stalled ribosomes, contacting rRNA.

Its function is as follows. Endonuclease that is involved in the suppression of homologous recombination and thus may have a key role in the control of bacterial genetic diversity. In terms of biological role, acts as a ribosome collision sensor, splitting the ribosome into its 2 subunits. Detects stalled/collided 70S ribosomes which it binds and splits by an ATP-hydrolysis driven conformational change. Acts upstream of the ribosome quality control system (RQC), a ribosome-associated complex that mediates the extraction of incompletely synthesized nascent chains from stalled ribosomes and their subsequent degradation. Probably generates substrates for RQC. This chain is Endonuclease MutS2, found in Aquifex aeolicus (strain VF5).